Consider the following 392-residue polypeptide: S-adenosylmethionine synthase (392 aa).

Residue His-20 participates in ATP binding. Asp-22 contributes to the Mg(2+) binding site. Glu-48 provides a ligand contact to K(+). L-methionine-binding residues include Glu-61 and Gln-106. The tract at residues 106–116 (QSRDIINAIEK) is flexible loop. Residues 171–173 (DSK), Asp-248, 254–255 (RK), Ala-271, and Lys-275 contribute to the ATP site. Position 248 (Asp-248) interacts with L-methionine. Lys-279 is a binding site for L-methionine.

Belongs to the AdoMet synthase family. Homotetramer; dimer of dimers. The cofactor is Mg(2+). K(+) is required as a cofactor.

The protein localises to the cytoplasm. It catalyses the reaction L-methionine + ATP + H2O = S-adenosyl-L-methionine + phosphate + diphosphate. It participates in amino-acid biosynthesis; S-adenosyl-L-methionine biosynthesis; S-adenosyl-L-methionine from L-methionine: step 1/1. Its function is as follows. Catalyzes the formation of S-adenosylmethionine (AdoMet) from methionine and ATP. The overall synthetic reaction is composed of two sequential steps, AdoMet formation and the subsequent tripolyphosphate hydrolysis which occurs prior to release of AdoMet from the enzyme. In Borreliella afzelii (strain PKo) (Borrelia afzelii), this protein is S-adenosylmethionine synthase.